A 74-amino-acid chain; its full sequence is Cell division protein ZapB (74 aa).

Residues 2 to 74 (TLDLLEQLES…LVGKIEETES (73 aa)) adopt a coiled-coil conformation.

This sequence belongs to the ZapB family. In terms of assembly, homodimer. The ends of the coiled-coil dimer bind to each other, forming polymers. Interacts with FtsZ.

It localises to the cytoplasm. Non-essential, abundant cell division factor that is required for proper Z-ring formation. It is recruited early to the divisome by direct interaction with FtsZ, stimulating Z-ring assembly and thereby promoting cell division earlier in the cell cycle. Its recruitment to the Z-ring requires functional FtsA or ZipA. The sequence is that of Cell division protein ZapB from Psychromonas ingrahamii (strain DSM 17664 / CCUG 51855 / 37).